Consider the following 526-residue polypeptide: Arginine/ornithine antiporter ArcD1 (526 aa).

14 helical membrane-spanning segments follow: residues 8–28, 41–61, 88–108, 128–148, 160–180, 220–240, 255–275, 297–317, 354–374, 378–398, 407–427, 428–448, 466–486, and 495–515; these read GIGLAALVAIIVSGAIGGGVF, GGVVISWIVIGFGILMLVLSL, FISGWGYWLSAWAGNIAFAVL, LTILSVIVVSIVSWGLTLLVM, IVLVAKLIPLFVFVIAGIVTF, VKGSLMVMIWVFVGIEGAAMM, IFGLIALLVIYILLSLLPFGF, VGGWGGSLMAIGLVISLLGAW, LLLTQLIVQIFLIVTYFVADA, FVYLCTAVIMICYALVGLYLF, TSNIIIGFIAAAFQILALYYS, GWQFVWLSLILYAVGFILYAL, FILTVLGILAVFGVYGNWLGL, and NTLLVAVVPLIVVTFIVYFVV.

Belongs to the amino acid-polyamine-organocation (APC) superfamily. Basic amino acid/polyamine antiporter (APA) (TC 2.A.3.2) family.

It localises to the cell membrane. It catalyses the reaction L-ornithine(in) + L-arginine(out) = L-ornithine(out) + L-arginine(in). In terms of biological role, catalyzes electroneutral exchange between L-arginine and L-ornithine. Can also efficiently translocate L-histidine and L-lysine. ArcD1 is the main L-arginine/L-ornithine exchanger in the arginine deiminase (ADI) pathway. The sequence is that of Arginine/ornithine antiporter ArcD1 from Lactococcus lactis subsp. cremoris (strain MG1363).